The chain runs to 450 residues: uncharacterized protein (450 aa).

A compositionally biased stretch (basic and acidic residues) spans 141–151 (WLDKTDGEKNS). Disordered regions lie at residues 141-171 (WLDKTDGEKNSEASSTDNSLENSTKGADSAG), 276-298 (LQDSENVQGDKGEKESKDDAVSQ), and 395-416 (DDEDEDNVDNSEGDEESLLSRN). A compositionally biased stretch (polar residues) spans 152–171 (EASSTDNSLENSTKGADSAG). The span at 283–298 (QGDKGEKESKDDAVSQ) shows a compositional bias: basic and acidic residues. Acidic residues predominate over residues 395 to 411 (DDEDEDNVDNSEGDEES).

This is an uncharacterized protein from Saccharomyces cerevisiae (strain ATCC 204508 / S288c) (Baker's yeast).